We begin with the raw amino-acid sequence, 324 residues long: MPLFNSLCWFPTIHVTPPSFILNGIPGLERVHVWISLPLCTMYIIFLVGNLGLVYLIYYEESLHHPMYFFFGHALSLIDLLTCTTTLPNALCIFWFSLKEINFNACLAQMFFVHGFTGVESGVLMLMALDRYVAICYPLRYATTLTNPIIAKAELATFLRGVLLMIPFPFLVKRLPFCQSNIISHTYCDHMSVVKLSCASIKVNVIYGLMVALLIGVFDICCISLSYTLILKAAISLSSSDARQKAFSTCTAHISAIIITYVPAFFTFFAHRFGGHTIPPSLHIIVANLYLLLPPTLNPIVYGVKTKQIRKSVIKFFQGDKGAG.

The Extracellular portion of the chain corresponds to 1-33; sequence MPLFNSLCWFPTIHVTPPSFILNGIPGLERVHV. The helical transmembrane segment at 34–54 threads the bilayer; the sequence is WISLPLCTMYIIFLVGNLGLV. Residues 55-62 lie on the Cytoplasmic side of the membrane; that stretch reads YLIYYEES. A helical membrane pass occupies residues 63–84; sequence LHHPMYFFFGHALSLIDLLTCT. At 85–108 the chain is on the extracellular side; the sequence is TTLPNALCIFWFSLKEINFNACLA. An intrachain disulfide couples Cys-106 to Cys-198. Residues 109-129 form a helical membrane-spanning segment; the sequence is QMFFVHGFTGVESGVLMLMAL. Topologically, residues 130-148 are cytoplasmic; it reads DRYVAICYPLRYATTLTNP. The helical transmembrane segment at 149–169 threads the bilayer; the sequence is IIAKAELATFLRGVLLMIPFP. Topologically, residues 170–205 are extracellular; sequence FLVKRLPFCQSNIISHTYCDHMSVVKLSCASIKVNV. A helical membrane pass occupies residues 206–226; the sequence is IYGLMVALLIGVFDICCISLS. At 227 to 246 the chain is on the cytoplasmic side; it reads YTLILKAAISLSSSDARQKA. The chain crosses the membrane as a helical span at residues 247–267; that stretch reads FSTCTAHISAIIITYVPAFFT. Residues 268–283 are Extracellular-facing; that stretch reads FFAHRFGGHTIPPSLH. The chain crosses the membrane as a helical span at residues 284-304; it reads IIVANLYLLLPPTLNPIVYGV. Residues 305 to 324 lie on the Cytoplasmic side of the membrane; the sequence is KTKQIRKSVIKFFQGDKGAG.

The protein belongs to the G-protein coupled receptor 1 family.

The protein resides in the cell membrane. In terms of biological role, odorant receptor. This Homo sapiens (Human) protein is Olfactory receptor 52N5 (OR52N5).